A 917-amino-acid chain; its full sequence is Lipoxygenase 6, chloroplastic (917 aa).

The N-terminal 40 residues, 1 to 40 (MFVASPVKTNFNGVSLVKSPAFSALSCRKQHRVPISRQVR), are a transit peptide targeting the chloroplast. Basic and acidic residues predominate over residues 46 to 57 (EEKAVDQEDGKK). Residues 46–66 (EEKAVDQEDGKKSTNKPLINS) are disordered. Residues 98 to 216 (ERFEHQLELF…DNPQARIIFR (119 aa)) form the PLAT domain. Residues 219–917 (PCLPSETPDG…GRGIPNSISI (699 aa)) enclose the Lipoxygenase domain. The Fe cation site is built by H575, H580, H767, and N771. The tract at residues 880–904 (KDKKLKNRTGAGMPPYELLLPTSPH) is disordered. I917 is a Fe cation binding site.

It belongs to the lipoxygenase family. Fe cation serves as cofactor.

It is found in the plastid. The protein localises to the chloroplast. The enzyme catalyses (9Z,12Z)-octadecadienoate + O2 = (13S)-hydroperoxy-(9Z,11E)-octadecadienoate. It carries out the reaction (9Z,12Z,15Z)-octadecatrienoate + O2 = (13S)-hydroperoxy-(9Z,11E,15Z)-octadecatrienoate. Its pathway is lipid metabolism; oxylipin biosynthesis. Plant lipoxygenases may be involved in a number of diverse aspects of plant physiology including growth and development, pest resistance, and senescence or responses to wounding. Catalyzes the hydroperoxidation of lipids containing a cis,cis-1,4-pentadiene structure. 13S-lipoxygenase that can use linolenic acid as substrates. The polypeptide is Lipoxygenase 6, chloroplastic (Arabidopsis thaliana (Mouse-ear cress)).